The sequence spans 198 residues: Large ribosomal subunit protein bL12m (198 aa).

A mitochondrion-targeting transit peptide spans 1–36; the sequence is MLPAAARPLWGPCLGLRAAAFRLARRQVPCVCAVRH. 4 positions are modified to N6-acetyllysine: Lys-125, Lys-138, Lys-142, and Lys-144. Lys-150 carries the N6-acetyllysine; alternate modification. At Lys-150 the chain carries N6-succinyllysine; alternate. Lys-150 is covalently cross-linked (Glycyl lysine isopeptide (Lys-Gly) (interchain with G-Cter in ubiquitin)). Lys-162 carries the post-translational modification N6-succinyllysine. N6-acetyllysine occurs at positions 163 and 173. Position 178 is an N6-acetyllysine; alternate (Lys-178). Position 178 is an N6-succinyllysine; alternate (Lys-178). The residue at position 185 (Lys-185) is an N6-acetyllysine.

The protein belongs to the bacterial ribosomal protein bL12 family. As to quaternary structure, component of the mitochondrial large ribosomal subunit (mt-LSU). Mature mammalian 55S mitochondrial ribosomes consist of a small (28S) and a large (39S) subunit. The 28S small subunit contains a 12S ribosomal RNA (12S mt-rRNA) and 30 different proteins. The 39S large subunit contains a 16S rRNA (16S mt-rRNA), a copy of mitochondrial valine transfer RNA (mt-tRNA(Val)), which plays an integral structural role, and 52 different proteins. bL12m interacts with NOA1. Two mature forms are produced by differential two-step proteolytic cleavage. Cleaved by the mitochondrial processing protease to produce the long mature form and subsequently by the mitochondrial intermediate protease to produce the short mature form. In terms of processing, in the presence of CUL3, undergoes 'Lys-63'-linked ubiquitination at Lys-150 which results in proteasomal degradation.

It localises to the mitochondrion matrix. In terms of biological role, as a component of the mitochondrial large ribosomal subunit, plays a role in mitochondrial translation. When present in mitochondria as a free protein not associated with the ribosome, associates with mitochondrial RNA polymerase POLRMT to activate transcription. Required for POLRMT stability. The sequence is that of Large ribosomal subunit protein bL12m (MRPL12) from Homo sapiens (Human).